A 311-amino-acid chain; its full sequence is Thioredoxin reductase (311 aa).

Glu-35–Gln-42 serves as a coordination point for FAD. Residues Cys-134 and Cys-137 are joined by a disulfide bond. Asp-277–Ile-286 lines the FAD pocket.

The protein belongs to the class-II pyridine nucleotide-disulfide oxidoreductase family. As to quaternary structure, homodimer. The cofactor is FAD.

The protein resides in the cytoplasm. The catalysed reaction is [thioredoxin]-dithiol + NADP(+) = [thioredoxin]-disulfide + NADPH + H(+). This Staphylococcus aureus (strain COL) protein is Thioredoxin reductase (trxB).